Here is a 403-residue protein sequence, read N- to C-terminus: Argininosuccinate synthase (403 aa).

10–18 provides a ligand contact to ATP; that stretch reads AYSGGLDTS. Residues Tyr88 and Ser93 each contribute to the L-citrulline site. Position 118 (Gly118) interacts with ATP. The L-aspartate site is built by Thr120, Asn124, and Asp125. Asn124 contributes to the L-citrulline binding site. Positions 128, 177, 186, 263, and 275 each coordinate L-citrulline.

It belongs to the argininosuccinate synthase family. Type 1 subfamily. Homotetramer.

It localises to the cytoplasm. It carries out the reaction L-citrulline + L-aspartate + ATP = 2-(N(omega)-L-arginino)succinate + AMP + diphosphate + H(+). It functions in the pathway amino-acid biosynthesis; L-arginine biosynthesis; L-arginine from L-ornithine and carbamoyl phosphate: step 2/3. The sequence is that of Argininosuccinate synthase from Clostridium perfringens (strain ATCC 13124 / DSM 756 / JCM 1290 / NCIMB 6125 / NCTC 8237 / Type A).